Reading from the N-terminus, the 416-residue chain is Probable 26S proteasome regulatory subunit rpn-6.2 (416 aa).

Positions 217 to 386 (YKTSFSYFYE…DTVVVYPKAD (170 aa)) constitute a PCI domain.

The protein belongs to the proteasome subunit S9 family. In terms of assembly, component of the lid subcomplex of the 19S proteasome regulatory particle complex (also named PA700 complex). The 26S proteasome consists of a 20S proteasome core and two 19S regulatory subunits.

Component of the lid subcomplex of the 26S proteasome, a multiprotein complex involved in the ATP-dependent degradation of ubiquitinated proteins. In the complex, rpn-6.2 is required for proteasome assembly. The chain is Probable 26S proteasome regulatory subunit rpn-6.2 (rpn-6.2) from Caenorhabditis elegans.